Here is a 412-residue protein sequence, read N- to C-terminus: Light-independent protochlorophyllide reductase subunit N (412 aa).

[4Fe-4S] cluster-binding residues include C17, C42, and C103.

This sequence belongs to the BchN/ChlN family. Protochlorophyllide reductase is composed of three subunits; ChlL, ChlN and ChlB. Forms a heterotetramer of two ChlB and two ChlN subunits. [4Fe-4S] cluster is required as a cofactor.

It carries out the reaction chlorophyllide a + oxidized 2[4Fe-4S]-[ferredoxin] + 2 ADP + 2 phosphate = protochlorophyllide a + reduced 2[4Fe-4S]-[ferredoxin] + 2 ATP + 2 H2O. It functions in the pathway porphyrin-containing compound metabolism; chlorophyll biosynthesis (light-independent). Component of the dark-operative protochlorophyllide reductase (DPOR) that uses Mg-ATP and reduced ferredoxin to reduce ring D of protochlorophyllide (Pchlide) to form chlorophyllide a (Chlide). This reaction is light-independent. The NB-protein (ChlN-ChlB) is the catalytic component of the complex. The chain is Light-independent protochlorophyllide reductase subunit N from Synechococcus sp. (strain CC9902).